A 160-amino-acid chain; its full sequence is Deoxyuridine 5'-triphosphate nucleotidohydrolase (160 aa).

Residues 79–81 (RSG), N92, 96–98 (TVD), and K106 each bind substrate.

It belongs to the dUTPase family. It depends on Mg(2+) as a cofactor.

It carries out the reaction dUTP + H2O = dUMP + diphosphate + H(+). The protein operates within pyrimidine metabolism; dUMP biosynthesis; dUMP from dCTP (dUTP route): step 2/2. This enzyme is involved in nucleotide metabolism: it produces dUMP, the immediate precursor of thymidine nucleotides and it decreases the intracellular concentration of dUTP so that uracil cannot be incorporated into DNA. This Rhizobium meliloti (strain 1021) (Ensifer meliloti) protein is Deoxyuridine 5'-triphosphate nucleotidohydrolase.